Here is a 323-residue protein sequence, read N- to C-terminus: Beta-ketoacyl-[acyl-carrier-protein] synthase III (323 aa).

Active-site residues include Cys113 and His250. Residues 251–255 (QANKR) are ACP-binding. The active site involves Asn280.

Belongs to the thiolase-like superfamily. FabH family. As to quaternary structure, homodimer.

Its subcellular location is the cytoplasm. It carries out the reaction malonyl-[ACP] + acetyl-CoA + H(+) = 3-oxobutanoyl-[ACP] + CO2 + CoA. It functions in the pathway lipid metabolism; fatty acid biosynthesis. Its function is as follows. Catalyzes the condensation reaction of fatty acid synthesis by the addition to an acyl acceptor of two carbons from malonyl-ACP. Catalyzes the first condensation reaction which initiates fatty acid synthesis and may therefore play a role in governing the total rate of fatty acid production. Possesses both acetoacetyl-ACP synthase and acetyl transacylase activities. Its substrate specificity determines the biosynthesis of branched-chain and/or straight-chain of fatty acids. The chain is Beta-ketoacyl-[acyl-carrier-protein] synthase III from Brucella melitensis biotype 2 (strain ATCC 23457).